The sequence spans 232 residues: MHIIKTVLIRHGESQWNKDNRFTGWIDVDLSNQGYSEAKRAGQLLKKYKFIFDYGYTSVLKRTIHTLWVILDQLNQTWLPIQKVWQLNERHYGALQGLNKNEAIKTYGYDTIQKWRRSFKDIPPKNNKNDLFLGTNDIRYKNIETNTLPNGESLELTANRVIPYWQKYIEPKIYNNNCIIIVAHGNSIRAILKFLNQLDDSEIFNIEIPTGIPLIYEFDNNIKPIRYYYLSE.

Substrate-binding positions include 10–17 (RHGESQWN), 23–24 (TG), Arg-62, 89–92 (ERHY), Lys-100, 116–117 (RR), and 185–186 (GN). His-11 (tele-phosphohistidine intermediate) is an active-site residue. Glu-89 functions as the Proton donor/acceptor in the catalytic mechanism.

Belongs to the phosphoglycerate mutase family. BPG-dependent PGAM subfamily. As to quaternary structure, homodimer.

It catalyses the reaction (2R)-2-phosphoglycerate = (2R)-3-phosphoglycerate. Its pathway is carbohydrate degradation; glycolysis; pyruvate from D-glyceraldehyde 3-phosphate: step 3/5. Its function is as follows. Catalyzes the interconversion of 2-phosphoglycerate and 3-phosphoglycerate. This Blochmanniella floridana protein is 2,3-bisphosphoglycerate-dependent phosphoglycerate mutase.